A 229-amino-acid polypeptide reads, in one-letter code: Small ribosomal subunit protein uS2c (229 aa).

The protein belongs to the universal ribosomal protein uS2 family.

It localises to the plastid. The protein resides in the chloroplast. This is Small ribosomal subunit protein uS2c (rps2) from Trieres chinensis (Marine centric diatom).